A 118-amino-acid polypeptide reads, in one-letter code: MNQIDAIEMAQMKKNIPKFIPGDTIKVQVKIVEGDKSRIQAFQGVCLGRQNGGIRESFTVRKISNGVGVERVFPLHSPSIEAIEVVTRGQVRRAKLYYLRKLRGKASRIKERKYVAGQ.

The protein belongs to the bacterial ribosomal protein bL19 family.

Functionally, this protein is located at the 30S-50S ribosomal subunit interface and may play a role in the structure and function of the aminoacyl-tRNA binding site. This Citrifermentans bemidjiense (strain ATCC BAA-1014 / DSM 16622 / JCM 12645 / Bem) (Geobacter bemidjiensis) protein is Large ribosomal subunit protein bL19.